The following is a 201-amino-acid chain: ADP-ribosylation factor-like protein 4D (201 aa).

G2 carries N-myristoyl glycine lipidation. Residues 28–35 (GLDSAGKT), 76–80 (DVGGQ), and 135–138 (NKQD) contribute to the GTP site.

It belongs to the small GTPase superfamily. Arf family. As to quaternary structure, interacts with CYTH2; the interaction is direct and ARL4D GTP-dependent. Does not interact with ARL4D.

The protein localises to the nucleus. The protein resides in the nucleolus. It is found in the cell membrane. It localises to the cytoplasm. Functionally, small GTP-binding protein which cycles between an inactive GDP-bound and an active GTP-bound form, and the rate of cycling is regulated by guanine nucleotide exchange factors (GEF) and GTPase-activating proteins (GAP). GTP-binding protein that does not act as an allosteric activator of the cholera toxin catalytic subunit. Recruits CYTH1, CYTH2, CYTH3 and CYTH4 to the plasma membrane in GDP-bound form. The chain is ADP-ribosylation factor-like protein 4D (ARL4D) from Homo sapiens (Human).